We begin with the raw amino-acid sequence, 261 residues long: Phosphatidylglycerol--prolipoprotein diacylglyceryl transferase (261 aa).

The next 4 membrane-spanning stretches (helical) occupy residues 12-32 (ISIRWYAICIVTGLVLAVYLA), 41-61 (IIPDDILDFILVAFPVAIVGA), 87-107 (GIAGIAIYGGLIAGAIVLYFF), and 112-132 (LIHPVDFLDIAAPSVMIAQSI). Position 134 (Arg134) interacts with a 1,2-diacyl-sn-glycero-3-phospho-(1'-sn-glycerol). A run of 3 helical transmembrane segments spans residues 170 to 190 (QPTFLYESVWNLIGFILIIVL), 200 to 220 (GEIAAFYLIWYGFGRMIIEGM), and 229 to 249 (GLRVSQWLSLILIFVGIGIII).

Belongs to the Lgt family.

It is found in the cell membrane. The catalysed reaction is L-cysteinyl-[prolipoprotein] + a 1,2-diacyl-sn-glycero-3-phospho-(1'-sn-glycerol) = an S-1,2-diacyl-sn-glyceryl-L-cysteinyl-[prolipoprotein] + sn-glycerol 1-phosphate + H(+). The protein operates within protein modification; lipoprotein biosynthesis (diacylglyceryl transfer). Functionally, catalyzes the transfer of the diacylglyceryl group from phosphatidylglycerol to the sulfhydryl group of the N-terminal cysteine of a prolipoprotein, the first step in the formation of mature lipoproteins. The protein is Phosphatidylglycerol--prolipoprotein diacylglyceryl transferase of Streptococcus sanguinis (strain SK36).